Reading from the N-terminus, the 78-residue chain is Large ribosomal subunit protein bL28 (78 aa).

Belongs to the bacterial ribosomal protein bL28 family.

In Synechococcus sp. (strain WH7803), this protein is Large ribosomal subunit protein bL28.